Here is a 200-residue protein sequence, read N- to C-terminus: High mobility group protein B3 (200 aa).

Lysine 3 carries the post-translational modification N6-acetyllysine. DNA-binding regions (HMG box) lie at residues 9–79 (PKGK…KDYG) and 93–161 (PKRP…ADYK). Cysteine 23 carries the post-translational modification Cysteine sulfonic acid (-SO3H); alternate. A disulfide bridge connects residues cysteine 23 and cysteine 45. An N6-acetyllysine mark is found at lysine 30 and lysine 43. A Cysteine sulfonic acid (-SO3H); alternate modification is found at cysteine 45. Positions 71 to 97 (YDREMKDYGPAKGGKKKKDPNAPKRPP) are disordered. Position 98 is a phosphoserine (serine 98). A Cysteine sulfonic acid (-SO3H) modification is found at cysteine 104. Lysine 112 and lysine 139 each carry N6-acetyllysine. The interval 163-200 (KGKFDGAKGAAKVARKKVEEEDEEDEEEEEEEEEEEDE) is disordered. Residues 182–200 (EEDEEDEEEEEEEEEEEDE) are compositionally biased toward acidic residues.

Belongs to the HMGB family. Reduction/oxidation of cysteine residues Cys-23, Cys-45 and Cys-104 and a possible intramolecular disulfide bond involving Cys-23 and Cys-45 give rise to different redox forms with specific functional activities in various cellular compartments: 1- fully reduced HMGB3 (HMGB3C23hC45hC104h), 2- disulfide HMGB3 (HMGB3C23-C45C104h) and 3- sulfonyl HMGB3 (HMGB3C23soC45soC104so).

The protein resides in the nucleus. It is found in the chromosome. The protein localises to the cytoplasm. Multifunctional protein with various roles in different cellular compartments. May act in a redox sensitive manner. Associates with chromatin and binds DNA with a preference for non-canonical DNA structures such as single-stranded DNA. Can bend DNA and enhance DNA flexibility by looping thus providing a mechanism to promote activities on various gene promoters. Proposed to be involved in the innate immune response to nucleic acids by acting as a cytoplasmic promiscuous immunogenic DNA/RNA sensor. Negatively regulates B-cell and myeloid cell differentiation. In hematopoietic stem cells may regulate the balance between self-renewal and differentiation. Involved in negative regulation of canonical Wnt signaling. In Bos taurus (Bovine), this protein is High mobility group protein B3 (HMGB3).